The primary structure comprises 146 residues: Large ribosomal subunit protein uL23B (146 aa).

A disordered region spans residues 1-22 (MAPSSNKVGKAIQAKKAVVKGS).

Belongs to the universal ribosomal protein uL23 family.

Functionally, this protein binds to a specific region on the 26S rRNA. This chain is Large ribosomal subunit protein uL23B (rpl-23A.2), found in Caenorhabditis elegans.